The chain runs to 622 residues: Solute carrier family 2, facilitated glucose transporter member 12 (622 aa).

Residues 1–26 are disordered; the sequence is MVPVENTEGPNLLNQKGREAETEGSC. Over 1–44 the chain is Cytoplasmic; that stretch reads MVPVENTEGPNLLNQKGREAETEGSCGASGGGHPACAGGPSMFT. The chain crosses the membrane as a helical span at residues 45 to 65; it reads FLTSVTAAISGLLVGYELGLI. Topologically, residues 66-84 are extracellular; that stretch reads SGALLQIRTLLALTCHEQE. The chain crosses the membrane as a helical span at residues 85–105; it reads MVVSSLLIGAFLASLTGGVLI. The Cytoplasmic segment spans residues 106–111; the sequence is DRYGRR. A helical membrane pass occupies residues 112–132; the sequence is LAIILSSCLLGLGSLVLIMSL. Over 133–141 the chain is Extracellular; it reads SYTLLIMGR. A helical membrane pass occupies residues 142–162; it reads VAIGVSISLSSIATCVYIAEI. Residues 163 to 168 are Cytoplasmic-facing; the sequence is APQHRR. A helical transmembrane segment spans residues 169 to 189; the sequence is GLLVSLNELMIVTGILFAYIS. The Extracellular segment spans residues 190 to 201; sequence NYAFANISNGWK. N-linked (GlcNAc...) asparagine glycosylation is present at asparagine 195. Residues 202–222 form a helical membrane-spanning segment; that stretch reads YMFGLVIPLGVLQAIAMYFLP. At 223–282 the chain is on the cytoplasmic side; that stretch reads PSPRFLVMKGQEESAGKVLRKLRVISDTTEELTLIKSSLKDEYQYSFWDLFRSKDNMRTR. The chain crosses the membrane as a helical span at residues 283–303; that stretch reads ILIGLTLVFFVQTTGQPNILF. The Extracellular portion of the chain corresponds to 304 to 321; that stretch reads YASTVLKSVGFQSNEAAS. The chain crosses the membrane as a helical span at residues 322–342; it reads LASTGVGVVKVVSTIPATLLV. At 343–349 the chain is on the cytoplasmic side; the sequence is DHIGSKT. A helical transmembrane segment spans residues 350 to 370; it reads FLCIGSSVMSASLLTMGIVNL. Residues 371–471 lie on the Extracellular side of the membrane; sequence NINMNFTNIC…PAAYKWLSLA (101 aa). Residues asparagine 375, asparagine 387, asparagine 400, and asparagine 405 are each glycosylated (N-linked (GlcNAc...) asparagine). Residues 472–492 form a helical membrane-spanning segment; sequence SLLVYVAAFSIGLGPMPWLVL. The Cytoplasmic portion of the chain corresponds to 493-503; the sequence is SEIFPGGIRGR. Residues 504-524 traverse the membrane as a helical segment; it reads AMALTSSMNWGVNLLISLTFL. The Extracellular segment spans residues 525–533; the sequence is TVTDLIGLS. Residues 534–554 traverse the membrane as a helical segment; sequence WVCFIYTIMSLASLAFVVLFI. Residues 555-622 lie on the Cytoplasmic side of the membrane; the sequence is PETKGCSLEQ…GQSQRPSPDT (68 aa).

This sequence belongs to the major facilitator superfamily. Sugar transporter (TC 2.A.1.1) family. Glucose transporter subfamily. Expressed in skeletal muscle, heart, brain, kidney, spleen, adipose tissues and to a lesser extent in small intestine and lung.

Its subcellular location is the cell membrane. The protein resides in the endomembrane system. The protein localises to the cytoplasm. It localises to the perinuclear region. The catalysed reaction is D-glucose(out) = D-glucose(in). Its function is as follows. Insulin-independent facilitative glucose transporter. This chain is Solute carrier family 2, facilitated glucose transporter member 12, found in Mus musculus (Mouse).